A 537-amino-acid chain; its full sequence is Tyrosine-protein kinase Fyn (537 aa).

G2 is lipidated: N-myristoyl glycine. Residues C3 and C6 are each lipidated (S-palmitoyl cysteine). Residues 14 to 35 are disordered; the sequence is LTEERDGSLNQSSGYRYGTDPT. A phosphoserine mark is found at S21 and S26. The region spanning 82–143 is the SH3 domain; the sequence is TGVTLFVALY…PSNYVAPVDS (62 aa). An SH2 domain is found at 149-246; the sequence is WYFGKLGRKD…GLCCRLVVPC (98 aa). At Y185 the chain carries Phosphotyrosine. Residues 271–524 form the Protein kinase domain; the sequence is LQLIKRLGNG…YLQGFLEDYF (254 aa). ATP-binding positions include 277–285 and K299; that span reads LGNGQFGEV. Catalysis depends on D390, which acts as the Proton acceptor. Position 420 is a phosphotyrosine; by autocatalysis (Y420). Y531 is modified (phosphotyrosine).

Belongs to the protein kinase superfamily. Tyr protein kinase family. SRC subfamily. In terms of assembly, interacts (via its SH3 domain) with PIK3R1 and PRMT8. Interacts with FYB1, PAG1, and SH2D1A. Interacts with CD79A (tyrosine-phosphorylated form); the interaction increases FYN activity. Interacts (via SH2 domain) with CSF1R (tyrosine phosphorylated). Interacts with TOM1L1 (phosphorylated form). Interacts with KDR (tyrosine phosphorylated). Interacts (via SH3 domain) with KLHL2 (via N-terminus). Interacts with SH2D1A and SLAMF1. Interacts with ITCH; the interaction phosphorylates ITCH and negatively regulates its activity. Interacts with FASLG. Interacts with RUNX3. Interacts with KIT. Interacts with EPHA8; possible downstream effector of EPHA8 in regulation of cell adhesion. Interacts with PTK2/FAK1; this interaction leads to PTK2/FAK1 phosphorylation and activation. Interacts with CAV1; this interaction couples integrins to the Ras-ERK pathway. Interacts with UNC119. Interacts (via SH2 domain) with PTPRH (phosphorylated form). Interacts with PTPRO (phosphorylated form). Interacts with PTPRB (phosphorylated form). Interacts with FYB2. Interacts with DSCAM. Interacts with SKAP1 and FYB1; this interaction promotes the phosphorylation of CLNK. Interacts with NEDD9; in the presence of PTK2. It depends on Mn(2+) as a cofactor. In terms of processing, autophosphorylated at Tyr-420. Phosphorylation on the C-terminal tail at Tyr-531 by CSK maintains the enzyme in an inactive state. PTPRC/CD45 dephosphorylates Tyr-531 leading to activation. Dephosphorylation at Tyr-420 by PTPN2 negatively regulates T-cell receptor signaling. Phosphorylated at tyrosine residues, which can be enhanced by NTN1. Post-translationally, palmitoylated. Palmitoylation at Cys-3 and Cys-6, probably by ZDHHC21, regulates subcellular location. As to expression, detected in spinal cord oligodendrocytes (at protein level).

It is found in the cytoplasm. Its subcellular location is the nucleus. The protein resides in the cell membrane. It localises to the perikaryon. It catalyses the reaction L-tyrosyl-[protein] + ATP = O-phospho-L-tyrosyl-[protein] + ADP + H(+). With respect to regulation, inhibited by phosphorylation of Tyr-531 by leukocyte common antigen and activated by dephosphorylation of this site. Non-receptor tyrosine-protein kinase that plays a role in many biological processes including regulation of cell growth and survival, cell adhesion, integrin-mediated signaling, cytoskeletal remodeling, cell motility, immune response and axon guidance. Inactive FYN is phosphorylated on its C-terminal tail within the catalytic domain. Following activation by PKA, the protein subsequently associates with PTK2/FAK1, allowing PTK2/FAK1 phosphorylation, activation and targeting to focal adhesions. Involved in the regulation of cell adhesion and motility through phosphorylation of CTNNB1 (beta-catenin) and CTNND1 (delta-catenin). Regulates cytoskeletal remodeling by phosphorylating several proteins including the actin regulator WAS and the microtubule-associated proteins MAP2 and MAPT. Promotes cell survival by phosphorylating AGAP2/PIKE-A and preventing its apoptotic cleavage. Participates in signal transduction pathways that regulate the integrity of the glomerular slit diaphragm (an essential part of the glomerular filter of the kidney) by phosphorylating several slit diaphragm components including NPHS1, KIRREL1 and TRPC6. Plays a role in neural processes by phosphorylating DPYSL2, a multifunctional adapter protein within the central nervous system, ARHGAP32, a regulator for Rho family GTPases implicated in various neural functions, and SNCA, a small pre-synaptic protein. Involved in reelin signaling by mediating phosphorylation of DAB1 following reelin (RELN)-binding to its receptor. Participates in the downstream signaling pathways that lead to T-cell differentiation and proliferation following T-cell receptor (TCR) stimulation. Phosphorylates PTK2B/PYK2 in response to T-cell receptor activation. Also participates in negative feedback regulation of TCR signaling through phosphorylation of PAG1, thereby promoting interaction between PAG1 and CSK and recruitment of CSK to lipid rafts. CSK maintains LCK and FYN in an inactive form. Promotes CD28-induced phosphorylation of VAV1. In mast cells, phosphorylates CLNK after activation of immunoglobulin epsilon receptor signaling. Can also promote CD244-mediated NK cell activation. The protein is Tyrosine-protein kinase Fyn of Rattus norvegicus (Rat).